Reading from the N-terminus, the 225-residue chain is NAD(P)H-quinone oxidoreductase subunit K, chloroplastic (225 aa).

Residues Cys43, Cys44, Cys108, and Cys139 each coordinate [4Fe-4S] cluster.

This sequence belongs to the complex I 20 kDa subunit family. NDH is composed of at least 16 different subunits, 5 of which are encoded in the nucleus. [4Fe-4S] cluster serves as cofactor.

The protein resides in the plastid. It localises to the chloroplast thylakoid membrane. It carries out the reaction a plastoquinone + NADH + (n+1) H(+)(in) = a plastoquinol + NAD(+) + n H(+)(out). It catalyses the reaction a plastoquinone + NADPH + (n+1) H(+)(in) = a plastoquinol + NADP(+) + n H(+)(out). In terms of biological role, NDH shuttles electrons from NAD(P)H:plastoquinone, via FMN and iron-sulfur (Fe-S) centers, to quinones in the photosynthetic chain and possibly in a chloroplast respiratory chain. The immediate electron acceptor for the enzyme in this species is believed to be plastoquinone. Couples the redox reaction to proton translocation, and thus conserves the redox energy in a proton gradient. This is NAD(P)H-quinone oxidoreductase subunit K, chloroplastic from Lactuca sativa (Garden lettuce).